The chain runs to 129 residues: Phosphoribosyl-AMP cyclohydrolase (129 aa).

Asp79 is a Mg(2+) binding site. Cys80 is a binding site for Zn(2+). 2 residues coordinate Mg(2+): Asp81 and Asp83. Zn(2+) is bound by residues Cys96 and Cys103.

It belongs to the PRA-CH family. Homodimer. It depends on Mg(2+) as a cofactor. The cofactor is Zn(2+).

Its subcellular location is the cytoplasm. It carries out the reaction 1-(5-phospho-beta-D-ribosyl)-5'-AMP + H2O = 1-(5-phospho-beta-D-ribosyl)-5-[(5-phospho-beta-D-ribosylamino)methylideneamino]imidazole-4-carboxamide. Its pathway is amino-acid biosynthesis; L-histidine biosynthesis; L-histidine from 5-phospho-alpha-D-ribose 1-diphosphate: step 3/9. Functionally, catalyzes the hydrolysis of the adenine ring of phosphoribosyl-AMP. The chain is Phosphoribosyl-AMP cyclohydrolase from Magnetococcus marinus (strain ATCC BAA-1437 / JCM 17883 / MC-1).